Here is a 260-residue protein sequence, read N- to C-terminus: Membrane protein insertase YidC 1 (260 aa).

A signal peptide spans 1–22 (MLKSYRAVLVSLSLLFVFVLSG). Cysteine 23 carries N-palmitoyl cysteine lipidation. Cysteine 23 carries the S-diacylglycerol cysteine lipid modification. Transmembrane regions (helical) follow at residues 29 to 49 (IDAH…SFMI), 52 to 72 (VAHH…TLVI), 133 to 153 (LAGC…YYAI), 164 to 184 (FLWV…IAAL), and 213 to 233 (MPAM…LYWI).

This sequence belongs to the OXA1/ALB3/YidC family. Type 2 subfamily.

It is found in the cell membrane. In terms of biological role, required for the insertion and/or proper folding and/or complex formation of integral membrane proteins into the membrane. Involved in integration of membrane proteins that insert both dependently and independently of the Sec translocase complex, as well as at least some lipoproteins. In Bacillus cereus (strain ATCC 14579 / DSM 31 / CCUG 7414 / JCM 2152 / NBRC 15305 / NCIMB 9373 / NCTC 2599 / NRRL B-3711), this protein is Membrane protein insertase YidC 1.